A 79-amino-acid chain; its full sequence is Protein Vpu (79 aa).

Residues 1–7 (MLLLIKL) lie on the Extracellular side of the membrane. Residues 8 to 28 (GFIGLAIETLIVIVVWAIVYR) traverse the membrane as a helical segment. The Cytoplasmic segment spans residues 29–79 (IYREVKVEEKISQLRQRIRDRAEDSGNESDGDAEELANLLPPDRIDQDNWV). Residues 48-79 (DRAEDSGNESDGDAEELANLLPPDRIDQDNWV) form a disordered region. Residues S53 and S57 each carry the phosphoserine; by host CK2 modification. Positions 53–63 (SGNESDGDAEE) are enriched in acidic residues.

The protein belongs to the HIV-1 VPU protein family. As to quaternary structure, homopentamer. Interacts with host CD4 and BRTC; these interactions induce proteasomal degradation of CD4. Interacts with host BST2; this interaction leads to the degradation of host BST2. Interacts with host FBXW11. Interacts with host AP1M1; this interaction plays a role in the mistrafficking and subsequent degradation of host BST2. Interacts with host RANBP2; this interaction allows Vpu to down-regulate host BLM sumoylation. Post-translationally, phosphorylated by host CK2. This phosphorylation is necessary for interaction with human BTRC and degradation of CD4.

It is found in the host membrane. Its activity is regulated as follows. Ion channel activity is inhibited by hexamethylene amiloride in vitro. Functionally, enhances virion budding by targeting host CD4 and Tetherin/BST2 to proteasome degradation. Degradation of CD4 prevents any unwanted premature interactions between viral Env and its host receptor CD4 in the endoplasmic reticulum. Degradation of antiretroviral protein Tetherin/BST2 is important for virion budding, as BST2 tethers new viral particles to the host cell membrane. Mechanistically, Vpu bridges either CD4 or BST2 to BTRC, a substrate recognition subunit of the Skp1/Cullin/F-box protein E3 ubiquitin ligase, induces their ubiquitination and subsequent proteasomal degradation. The alteration of the E3 ligase specificity by Vpu seems to promote the degradation of host IKBKB, leading to NF-kappa-B down-regulation and subsequent apoptosis. Acts as a viroporin that forms an oligomeric ion channel in membranes. Modulates the host DNA repair mechanisms to promote degradation of nuclear viral cDNA in cells that are already productively infected in order to suppress immune sensing and proviral hyper-integration (superinfection). Manipulates PML-NBs and modulates SUMOylation of host BLM protein thereby enhancing its DNA-end processing activity toward viral unintegrated linear DNA. Also inhibits RAD52-mediated homologous repair of viral cDNA, preventing the generation of dead-end circular forms of single copies of the long terminal repeat and permitting sustained nucleolytic attack. This is Protein Vpu from Pan troglodytes (Chimpanzee).